Consider the following 356-residue polypeptide: MYLSDFYFDLPDELIARYPKRERSSSRMLQLNGQNGELFHRTFSDVADLINEGDLLIFNNTRVIPARMFGRKASGGKIEVLVERVLNEHHFLAHIRSSKSPKENTVLFLGEDKLGEGKGVEMLMKARHENLFELELSDKSTALLDILQKIGHMPLPPYIDRPDEDADKERYQTVYNKVPGAVAAPTAGLHFDDELLTQLKNKGVNFAFVTLHVGAGTFQPVRVENIEDHKMHAEYVEVPQEVVDAVLATKAKGKRVIAVGTTSVRSIESAALFAEENNSTHLLEPYFSDTSIFIYPGKKFRVIDCLITNFHLPESTLIMLVSAFAGYQHTMNAYKSAVENRYRFFSYGDAMFITKA.

Belongs to the QueA family. As to quaternary structure, monomer.

Its subcellular location is the cytoplasm. It catalyses the reaction 7-aminomethyl-7-carbaguanosine(34) in tRNA + S-adenosyl-L-methionine = epoxyqueuosine(34) in tRNA + adenine + L-methionine + 2 H(+). It functions in the pathway tRNA modification; tRNA-queuosine biosynthesis. In terms of biological role, transfers and isomerizes the ribose moiety from AdoMet to the 7-aminomethyl group of 7-deazaguanine (preQ1-tRNA) to give epoxyqueuosine (oQ-tRNA). This is S-adenosylmethionine:tRNA ribosyltransferase-isomerase from Histophilus somni (strain 2336) (Haemophilus somnus).